Consider the following 872-residue polypeptide: Protein SEY1 (872 aa).

Topologically, residues 1 to 749 are cytoplasmic; it reads MVANGHFAGV…KRSAIGGITQ (749 aa). The GB1/RHD3-type G domain occupies 49-307; it reads GFNYHLISVF…IPADGFAVYA (259 aa). Position 59–66 (59–66) interacts with GTP; sequence GSQSTGKS. Residues 482–504 are a coiled coil; that stretch reads SNYQQELSLYQKDLENIGGQLRR. The tract at residues 676–704 is disordered; the sequence is LDKWIGHTPSSATPADEEDLTPIGGVDED. Acidic residues predominate over residues 690-704; the sequence is ADEEDLTPIGGVDED. Residues 750-770 traverse the membrane as a helical segment; that stretch reads VPLYFYGLLLALGWNEIVAVL. Topologically, residues 771 to 773 are lumenal; the sequence is RNP. The chain crosses the membrane as a helical span at residues 774-794; sequence AYFLLLFVCAVTAYVTYQLNL. Over 795–872 the chain is Cytoplasmic; it reads WGPIIKMTEA…IDDADDDDDF (78 aa). The disordered stretch occupies residues 849–872; that stretch reads NRKSAGGFQNNRSHIDDADDDDDF.

Belongs to the TRAFAC class dynamin-like GTPase superfamily. GB1/RHD3 GTPase family. RHD3 subfamily.

Its subcellular location is the endoplasmic reticulum membrane. In terms of biological role, cooperates with the reticulon proteins and tubule-shaping DP1 family proteins to generate and maintain the structure of the tubular endoplasmic reticulum network. Has GTPase activity, which is required for its function in ER organization. In Paracoccidioides brasiliensis (strain Pb18), this protein is Protein SEY1.